Reading from the N-terminus, the 185-residue chain is Pro-adrenomedullin (185 aa).

Positions M1–T21 are cleaved as a signal peptide. The residue at position 41 (R41) is an Arginine amide. A propeptide spanning residues E45–V91 is cleaved from the precursor. The disordered stretch occupies residues G68 to I89. Over residues Q73 to A87 the composition is skewed to low complexity. Residues C107 and C112 are joined by a disulfide bond. The interval T125 to L185 is disordered. Y143 is subject to Tyrosine amide. Residues S150–L185 constitute a propeptide, preproAM C-terminal fragment. A compositionally biased stretch (polar residues) spans V160 to A170.

This sequence belongs to the adrenomedullin family. As to expression, expressed in adrenal glands, lung, kidney, heart, spleen, duodenum and submandibular glands.

The protein localises to the secreted. Functionally, adrenomedullin/ADM and proadrenomedullin N-20 terminal peptide/PAMP are peptide hormones that act as potent hypotensive and vasodilatator agents. Numerous actions have been reported most related to the physiologic control of fluid and electrolyte homeostasis. In terms of biological role, ADM function is mediated by the CALCRL-RAMP2 and CALCRL-RAMP3 receptor complexes with ADM showing the highest potency for the CALCRL-RAMP2 complex. This chain is Pro-adrenomedullin, found in Rattus norvegicus (Rat).